A 319-amino-acid polypeptide reads, in one-letter code: Probable metallo-hydrolase YqjP (319 aa).

Zn(2+) is bound by residues H67, H69, D71, H72, H165, D184, and H231.

It belongs to the metallo-beta-lactamase superfamily. Zn(2+) is required as a cofactor.

The polypeptide is Probable metallo-hydrolase YqjP (yqjP) (Bacillus subtilis (strain 168)).